Reading from the N-terminus, the 567-residue chain is Cytochrome P450 monooxygenase 69 (567 aa).

A helical transmembrane segment spans residues 7 to 24 (ELAALTVVLLATGVLFYA). N25, N81, N223, and N279 each carry an N-linked (GlcNAc...) asparagine glycan. Heme is bound at residue C475.

The protein belongs to the cytochrome P450 family. It depends on heme as a cofactor.

Its subcellular location is the membrane. Its pathway is secondary metabolite biosynthesis. Functionally, cytochrome P450 monooxygenase that is able to use 4-ethoxybenzoic acid as a substrate for oxidation. This Postia placenta (strain ATCC 44394 / Madison 698-R) (Brown rot fungus) protein is Cytochrome P450 monooxygenase 69.